A 152-amino-acid polypeptide reads, in one-letter code: Deoxyuridine 5'-triphosphate nucleotidohydrolase (152 aa).

Substrate contacts are provided by residues 71–73, Asn84, 88–90, and Met98; these read RSG and LID.

This sequence belongs to the dUTPase family. It depends on Mg(2+) as a cofactor.

It catalyses the reaction dUTP + H2O = dUMP + diphosphate + H(+). It functions in the pathway pyrimidine metabolism; dUMP biosynthesis; dUMP from dCTP (dUTP route): step 2/2. This enzyme is involved in nucleotide metabolism: it produces dUMP, the immediate precursor of thymidine nucleotides and it decreases the intracellular concentration of dUTP so that uracil cannot be incorporated into DNA. This chain is Deoxyuridine 5'-triphosphate nucleotidohydrolase, found in Enterobacter sp. (strain 638).